The following is a 429-amino-acid chain: Glutamate-1-semialdehyde 2,1-aminomutase (429 aa).

Lysine 265 is subject to N6-(pyridoxal phosphate)lysine.

This sequence belongs to the class-III pyridoxal-phosphate-dependent aminotransferase family. HemL subfamily. In terms of assembly, homodimer. Pyridoxal 5'-phosphate serves as cofactor.

The protein resides in the cytoplasm. It carries out the reaction (S)-4-amino-5-oxopentanoate = 5-aminolevulinate. It participates in porphyrin-containing compound metabolism; protoporphyrin-IX biosynthesis; 5-aminolevulinate from L-glutamyl-tRNA(Glu): step 2/2. The polypeptide is Glutamate-1-semialdehyde 2,1-aminomutase (Acidobacterium capsulatum (strain ATCC 51196 / DSM 11244 / BCRC 80197 / JCM 7670 / NBRC 15755 / NCIMB 13165 / 161)).